Reading from the N-terminus, the 257-residue chain is MPLAKRIIPCLDVDKGRVVKGVQFVDIRDAGDPVEVAKKYNEQGADEITFLDITASHEARETTINTVEKIAAEVFIPLTVGGGIRTLDDIRNMLNAGADKVSINSAAVKDPDFVRIAAEKFGSQCIVVAIDAKRVSADGEPGRWEIFTHGGRNPTGIDAVEWAVRMTEYGAGEILLTSMDRDGTKDGFDLGVTRAISEAVRVPVIASGGVGNLQHLVDGVIKGGADAVLAASIFHFGEYTVPEAKAYMEQHGIEVRL.

Active-site residues include D12 and D131.

This sequence belongs to the HisA/HisF family. As to quaternary structure, heterodimer of HisH and HisF.

Its subcellular location is the cytoplasm. It catalyses the reaction 5-[(5-phospho-1-deoxy-D-ribulos-1-ylimino)methylamino]-1-(5-phospho-beta-D-ribosyl)imidazole-4-carboxamide + L-glutamine = D-erythro-1-(imidazol-4-yl)glycerol 3-phosphate + 5-amino-1-(5-phospho-beta-D-ribosyl)imidazole-4-carboxamide + L-glutamate + H(+). It participates in amino-acid biosynthesis; L-histidine biosynthesis; L-histidine from 5-phospho-alpha-D-ribose 1-diphosphate: step 5/9. IGPS catalyzes the conversion of PRFAR and glutamine to IGP, AICAR and glutamate. The HisF subunit catalyzes the cyclization activity that produces IGP and AICAR from PRFAR using the ammonia provided by the HisH subunit. This Teredinibacter turnerae (strain ATCC 39867 / T7901) protein is Imidazole glycerol phosphate synthase subunit HisF.